Reading from the N-terminus, the 129-residue chain is N16.2 matrix protein (129 aa).

The first 23 residues, 1–23, serve as a signal peptide directing secretion; it reads MKCTLRWTITALVLLGICHLARP. Repeat copies occupy residues 91-92, 93-94, 95-96, 97-98, and 99-100. The 5 X 2 AA tandem repeats of N-G stretch occupies residues 91–100; it reads NGNGDGNGNG.

Belongs to the N16 matrix protein family. Heterooligomer; disulfide-linked. Pif97, Pif80, N16 and other proteins form a complex. In terms of tissue distribution, component of conchiolin, the organic matrix of nacre. Expressed at extremely high levels in the dorsal region of the mantle, which region may be responsible for the nacreous layer formation, but only in trace amounts at the mantle edge, which region may be responsible for the prismatic layer formation.

The protein resides in the secreted. It localises to the extracellular space. The protein localises to the extracellular matrix. Functionally, may be specifically involved in the formation of the nacreous layer. The sequence is that of N16.2 matrix protein from Pinctada fucata (Akoya pearl oyster).